Consider the following 668-residue polypeptide: Small ribosomal subunit protein mS81 (rPPR8) (668 aa).

Residues 1–36 constitute a mitochondrion transit peptide; the sequence is MRYQQWRLMLLRSYHRSHLPYLSPCSQVTSISSRSF. 7 PPR repeats span residues 286–320, 321–355, 396–430, 431–465, 466–496, 502–537, and 543–577; these read DEKTYNAMARVLGKEKFLDRFQNIVVEMRSAGYEV, EIETYVRVSTRFCQTKLIKEAVDLFEIAMAGSSSS, TDSLLKSVLKSLRSVDRVEQSNELLKEMKRGGYVP, SGDMQSMIASSLSRKGKKDEADEFVDFMESSGNNL, DDKAMASLVEGYCDSGNLDEALVCFEKMVGN, ADYSFEKLVLAYCNKNQVRDAYKLLSAQVTKNQLKP, and KSLVTNLLTKKIARDGGFEEALSLLPIMKDHGFPP.

Belongs to the PPR family. P subfamily. Component of the mitochondrial ribosome small subunit.

The protein resides in the mitochondrion. The protein is Small ribosomal subunit protein mS81 (rPPR8) of Arabidopsis thaliana (Mouse-ear cress).